A 164-amino-acid polypeptide reads, in one-letter code: Protein-export protein SecB (164 aa).

The protein belongs to the SecB family. As to quaternary structure, homotetramer, a dimer of dimers. One homotetramer interacts with 1 SecA dimer.

It is found in the cytoplasm. One of the proteins required for the normal export of preproteins out of the cell cytoplasm. It is a molecular chaperone that binds to a subset of precursor proteins, maintaining them in a translocation-competent state. It also specifically binds to its receptor SecA. This chain is Protein-export protein SecB, found in Nitrosococcus oceani (strain ATCC 19707 / BCRC 17464 / JCM 30415 / NCIMB 11848 / C-107).